An 859-amino-acid chain; its full sequence is Bifunctional levopimaradiene synthase, chloroplastic (859 aa).

Residues 1–70 constitute a chloroplast transit peptide; the sequence is MALLSSSLSS…IACVGEDSLS (70 aa). Lys-259 is a binding site for substrate. 2 residues coordinate Mg(2+): Asp-392 and Asp-394. A DXDD motif motif is present at residues 392–395; it reads DIDD. Lys-479 serves as a coordination point for substrate. Positions 611, 615, 755, 759, and 763 each coordinate Mg(2+). A DDXXD motif motif is present at residues 611–615; that stretch reads DDLYD.

This sequence belongs to the terpene synthase family. Tpsd subfamily. Mg(2+) is required as a cofactor.

The protein localises to the plastid. The protein resides in the chloroplast. It carries out the reaction (2E,6E,10E)-geranylgeranyl diphosphate = (+)-copalyl diphosphate. The enzyme catalyses (+)-copalyl diphosphate = abieta-8(14),12-diene + diphosphate. It participates in terpene metabolism; oleoresin biosynthesis. Functionally, involved in defensive oleoresin formation in conifers in response to insect attack or other injury. Involved in diterpene (C20) olefins biosynthesis. Bifunctional enzyme that catalyzes two sequential cyclizations of geranylgeranyl diphosphate (GGPP) to levopimaradiene. Levopimaradiene is the major products of the enzyme followed by abietadiene, neoabietadiene and palustradiene. The protein is Bifunctional levopimaradiene synthase, chloroplastic (TPS-LAS) of Picea abies (Norway spruce).